We begin with the raw amino-acid sequence, 279 residues long: Tumor protein p63-regulated gene 1 protein (279 aa).

The segment at 1 to 49 is disordered; sequence MSTIGSFDGFQPVSLKQEEEDQPSENDHLSTKEGNSGKDPGSRRISRQQ. The region spanning 72–259 is the hSac2 domain; that stretch reads VTRPGAIETA…ILIETYTGLM (188 aa).

This sequence belongs to the TPRG1 family. In terms of tissue distribution, highly expressed in skin. Also detected at low levels in tongue and esophagus.

Its subcellular location is the cytoplasm. The protein is Tumor protein p63-regulated gene 1 protein of Mus musculus (Mouse).